The chain runs to 464 residues: MPEDTSYSNSFEDYYNNSHAISPYKDSFYKEMTPSKPNVRFGDDDVNIFDQRKKVNEINKNNTVKRSIPSSISTTITPNKSSLKSPRGKRASKNSFDNETKLESKNETLKEVNDAVNRCYALCNIPTKHVSINSISDLAQTFETLAVGITHETNRKAECERSKNAIDSLYYHEQLEKKELNEKSLQMAIDHLLKVTKQNLRQADDGNKLKETEALKSFIEEIEEVDDNKISINSLQQQLLEEKTANNILRRDYYKLQERGRRLCHEFQELQDDYSKQMKQKEYEVQKLKNEIKVLLNMNDNLKAEKAHYSQKEKQYFQKYTYIEKYMNHVKEEYNRKEDECKKLNFIIDKSMKKIEHLERSLQTQFTAQNSFSTAMIQEEGPKDAHLKDRYHKVKEFMEQKLQTSKINDPSCSEAEALDNVLCLIESSMKTLDKNSKCYPIATKKCIKYVTDSPRLKENEHVTN.

Positions 71–102 (SISTTITPNKSSLKSPRGKRASKNSFDNETKL) are disordered. Coiled-coil stretches lie at residues 99 to 119 (ETKLESKNETLKEVNDAVNRC), 156 to 193 (KAECERSKNAIDSLYYHEQLEKKELNEKSLQMAIDHLL), and 231 to 365 (SINS…LQTQ).

In terms of assembly, interacts directly with SPO21/MPC70, NUD1, SPO74 and SPC42. Probable component of a spindle pole body (SPB) complex composed of ADY3, SSP1, DON1, MPC54, SPO21/MPC70, NUD1 and CNM67.

It is found in the prospore membrane. The protein resides in the cytoplasm. The protein localises to the cytoskeleton. Its subcellular location is the microtubule organizing center. It localises to the spindle pole body. It is found in the spindle pole. Functionally, involved in the pathway that organizes the shaping and sizing of the prospore membrane (PSM) during sporulation. The protein is Meiotic plaque component protein 54 (MPC54) of Saccharomyces cerevisiae (strain ATCC 204508 / S288c) (Baker's yeast).